A 717-amino-acid chain; its full sequence is Adhesion cell surface protein MAD1 (717 aa).

The N-terminal stretch at 1–19 (MKSALSVVVAAAGVQQASA) is a signal peptide. Composition is skewed to low complexity over residues 237-254 (TPVTTLQTYTTPSQQTTT) and 262-274 (SKETTTSAQQTTP). Disordered stretches follow at residues 237–392 (TPVT…ATTT) and 451–506 (RTQS…TPPC). A run of 8 repeats spans residues 275-286 (GKETTPAQQTTP), 287-298 (SKETTPVQQTTS), 299-310 (GKETTPAQQTTP), 311-328 (GKETTSSQETTSAHQTTP), 329-340 (GKETTPAQQTTP), 341-352 (GKETTPAQQTTP), 353-364 (GKETTPAQQTTP), and 365-376 (GKETTPAQQTTP). A compositionally biased stretch (polar residues) spans 275-366 (GKETTPAQQT…TPAQQTTPGK (92 aa)). Low complexity-rich tracts occupy residues 368 to 392 (TTPAQQTTPGQQTTPSQPTTAATTT) and 484 to 503 (QPTGEKPNPVTSQPPQSTQT). Positions 481–595 (TPEQPTGEKP…TQIITVTGTP (115 aa)) constitute a CFEM domain. 3 cysteine pairs are disulfide-bonded: cysteine 513–cysteine 546, cysteine 524–cysteine 532, and cysteine 534–cysteine 568. Position 529 (aspartate 529) interacts with heme. N-linked (GlcNAc...) asparagine glycosylation is present at asparagine 614. Residues 632-690 (PTPTGGVPNQPPATASVPAGQNPPPVTGQNPPPAVTDQSPPPAITTGTGGVIPPKPTGS) are disordered. Residues 652-674 (QNPPPVTGQNPPPAVTDQSPPPA) are compositionally biased toward pro residues. Alanine 695 carries GPI-anchor amidated alanine lipidation. Residues 696–717 (GSGRVGAGLGMVLAVAAFVAAL) constitute a propeptide, removed in mature form.

It belongs to the RBT5 family. Post-translationally, the GPI-anchor is attached to the protein in the endoplasmic reticulum and serves to target the protein to the cell surface. There, the glucosamine-inositol phospholipid moiety is cleaved off and the GPI-modified mannoprotein is covalently attached via its lipidless GPI glycan remnant to the 1,6-beta-glucan of the outer cell wall layer.

It localises to the secreted. It is found in the cell wall. The protein resides in the cell membrane. In terms of biological role, cell surface adhesion protein that plays a key role in virulence by allowing adherence to the insect host surface. Required to orientate the cytoskeleton and stimulate the expression of genes involved in the cell cycle. Is also involved in achieving the septin hourglass shape and subsequent separation of cells. The sequence is that of Adhesion cell surface protein MAD1 from Metarhizium anisopliae (Entomophthora anisopliae).